The following is a 534-amino-acid chain: Alkaline serine exoprotease A (534 aa).

A signal peptide spans 1–21; the sequence is MLKKLLSCCITSALCFHSSLA. Positions 22 to 141 are excised as a propeptide; sequence FSQPNEIADS…LSLDPIVSAD (120 aa). The Inhibitor I9 domain occupies 57–134; sequence RYIVVFQQPQ…YIEQDRILSL (78 aa). Positions 148–419 constitute a Peptidase S8 domain; it reads IWGLDRIDQR…KLLYSLTDAD (272 aa). Active-site charge relay system residues include Asp-180, His-213, and Ser-363. Residues 423 to 442 are disordered; it reads DCGGPDPTPDPEGKLTSGVP.

The protein belongs to the peptidase S8 family.

This Vibrio alginolyticus protein is Alkaline serine exoprotease A (proA).